The sequence spans 81 residues: Weak neurotoxin OH-72 (81 aa).

The signal sequence occupies residues 1-16 (LTLVVVTIVCLDLGYT). Disulfide bonds link Cys19–Cys40, Cys22–Cys27, Cys33–Cys58, Cys62–Cys73, and Cys74–Cys79.

Belongs to the three-finger toxin family. Ancestral subfamily. Orphan group II sub-subfamily. Expressed by the venom gland.

It is found in the secreted. Its function is as follows. Binds with low affinity to muscular (alpha-1-beta-1-delta-epsilon/CHRNA1-CHRNB1-CHRND-CHRNE) and very low affinity to neuronal (alpha-7/CHRNA7) nicotinic acetylcholine receptor (nAChR). This chain is Weak neurotoxin OH-72, found in Ophiophagus hannah (King cobra).